Consider the following 353-residue polypeptide: Replication-associated protein (353 aa).

Residues 8 to 116 (RVQSKNYFLT…DGVTIEWGQF (109 aa)) enclose the CRESS-DNA virus Rep endonuclease domain. The short motif at 15-18 (FLTY) is the RCR-1 element. The a divalent metal cation site is built by E49, H57, and H59. Positions 57 to 59 (HLH) match the RCR-2 motif. Residue Y103 is the For DNA cleavage activity of the active site. The short motif at 103–106 (YIDK) is the RCR-3 element. Residue D107 participates in a divalent metal cation binding. The segment at 143-153 (IESALTILKEE) is binding to RBR1. The tract at residues 156–176 (KDYVLQNHNIRSNLERIFFKV) is oligomerization. An ATP-binding site is contributed by 222–229 (GDSRTGKT).

It belongs to the geminiviridae Rep protein family. Homooligomer. Interacts with the replication enhancer protein (REn). Interacts with host retinoblastoma-related protein 1 (RBR1), and may thereby induce the transcription of host replicative enzymes even if the cell is not dividing anymore. Interacts with host PCNA. Interacts with host SCE1 protein. Binds to host RAD54 protein to ensure geminiviral replication. Mg(2+) is required as a cofactor. It depends on Mn(2+) as a cofactor.

The protein resides in the host nucleus. Functionally, essential for the replication of viral ssDNA. The closed circular ssDNA genome is first converted to a superhelical dsDNA. Rep binds a specific region at the genome origin of replication. It introduces an endonucleolytic nick within the conserved sequence 5'-TAATATTAC-3' in the intergenic region of the genome present in all geminiviruses, thereby initiating the rolling circle replication (RCR). Following cleavage, binds covalently to the 5'-phosphate of DNA as a tyrosyl ester. The cleavage gives rise to a free 3'-OH that serves as a primer for the cellular DNA polymerase. The polymerase synthesizes the (+) strand DNA by rolling circle mechanism. After one round of replication, a Rep-catalyzed nucleotidyl transfer reaction releases a circular single-stranded virus genome, thereby terminating the replication. Displays origin-specific DNA cleavage, nucleotidyl transferase, ATPase and helicase activities. This chain is Replication-associated protein, found in Macroptilium lathyroides (Lima bean).